An 877-amino-acid chain; its full sequence is DNA mismatch repair protein MutS (877 aa).

An ATP-binding site is contributed by 630 to 637 (GPNMAGKS).

The protein belongs to the DNA mismatch repair MutS family.

Functionally, this protein is involved in the repair of mismatches in DNA. It is possible that it carries out the mismatch recognition step. This protein has a weak ATPase activity. The polypeptide is DNA mismatch repair protein MutS (Ruegeria pomeroyi (strain ATCC 700808 / DSM 15171 / DSS-3) (Silicibacter pomeroyi)).